The following is a 794-amino-acid chain: uncharacterized protein (794 aa).

A run of 9 helical transmembrane segments spans residues 34–54 (FSASTTTAALMSTLWIIVFAV), 67–87 (ITAALIHITSIPLGIGIAHLI), 99–119 (MLADVLLTPDFWVFGVAAFAS), 132–152 (LFLFTITLTLLLYTGTLADVT), 257–277 (VGPSVANLIPLILTVVLAMGL), 283–303 (LAWILAVLAQLISIAVLMFQL), 315–335 (WSVNAFSVIVPWLVALAVLVF), 353–373 (LGALMVTWLATAALWILATLF), and 421–441 (WTGTLFWLVVAATLYHLLMGV).

It localises to the cell membrane. This is an uncharacterized protein from Corynebacterium glutamicum (strain ATCC 13032 / DSM 20300 / JCM 1318 / BCRC 11384 / CCUG 27702 / LMG 3730 / NBRC 12168 / NCIMB 10025 / NRRL B-2784 / 534).